The primary structure comprises 271 residues: Mannosyl-3-phosphoglycerate phosphatase (271 aa).

Catalysis depends on D13, which acts as the Nucleophile. Mg(2+) contacts are provided by D13, D15, and D214.

This sequence belongs to the HAD-like hydrolase superfamily. MPGP family. Requires Mg(2+) as cofactor.

Its subcellular location is the cytoplasm. It carries out the reaction 2-O-(alpha-D-mannosyl)-3-phosphoglycerate + H2O = (2R)-2-O-(alpha-D-mannosyl)-glycerate + phosphate. The protein is Mannosyl-3-phosphoglycerate phosphatase of Escherichia coli O81 (strain ED1a).